We begin with the raw amino-acid sequence, 124 residues long: Small ribosomal subunit protein uS12 (124 aa).

Aspartate 89 carries the 3-methylthioaspartic acid modification. The disordered stretch occupies residues 105 to 124 (AGVKDRRQSRSKYGAKRPKA). Positions 113–124 (SRSKYGAKRPKA) are enriched in basic residues.

It belongs to the universal ribosomal protein uS12 family. As to quaternary structure, part of the 30S ribosomal subunit. Contacts proteins S8 and S17. May interact with IF1 in the 30S initiation complex.

Its function is as follows. With S4 and S5 plays an important role in translational accuracy. Interacts with and stabilizes bases of the 16S rRNA that are involved in tRNA selection in the A site and with the mRNA backbone. Located at the interface of the 30S and 50S subunits, it traverses the body of the 30S subunit contacting proteins on the other side and probably holding the rRNA structure together. The combined cluster of proteins S8, S12 and S17 appears to hold together the shoulder and platform of the 30S subunit. The protein is Small ribosomal subunit protein uS12 (rpsL) of Synechococcus elongatus (strain ATCC 33912 / PCC 7942 / FACHB-805) (Anacystis nidulans R2).